Consider the following 179-residue polypeptide: Segregation and condensation protein B (179 aa).

The protein belongs to the ScpB family. Homodimer. Homodimerization may be required to stabilize the binding of ScpA to the Smc head domains. Component of a cohesin-like complex composed of ScpA, ScpB and the Smc homodimer, in which ScpA and ScpB bind to the head domain of Smc. The presence of the three proteins is required for the association of the complex with DNA.

Its subcellular location is the cytoplasm. Its function is as follows. Participates in chromosomal partition during cell division. May act via the formation of a condensin-like complex containing Smc and ScpA that pull DNA away from mid-cell into both cell halves. In Staphylococcus haemolyticus (strain JCSC1435), this protein is Segregation and condensation protein B.